The primary structure comprises 301 residues: tRNA pseudouridine synthase B (301 aa).

The active-site Nucleophile is the aspartate 45.

It belongs to the pseudouridine synthase TruB family. Type 1 subfamily.

The catalysed reaction is uridine(55) in tRNA = pseudouridine(55) in tRNA. Functionally, responsible for synthesis of pseudouridine from uracil-55 in the psi GC loop of transfer RNAs. In Streptomyces coelicolor (strain ATCC BAA-471 / A3(2) / M145), this protein is tRNA pseudouridine synthase B.